The sequence spans 254 residues: 4-hydroxy-tetrahydrodipicolinate reductase (254 aa).

NAD(+) is bound by residues glycine 8–methionine 13, aspartate 35, cysteine 86–threonine 88, and serine 110–methionine 113. The active-site Proton donor/acceptor is the histidine 143. Residue histidine 144 participates in (S)-2,3,4,5-tetrahydrodipicolinate binding. Catalysis depends on lysine 147, which acts as the Proton donor. Glycine 153 to threonine 154 contributes to the (S)-2,3,4,5-tetrahydrodipicolinate binding site.

The protein belongs to the DapB family.

It is found in the cytoplasm. The catalysed reaction is (S)-2,3,4,5-tetrahydrodipicolinate + NAD(+) + H2O = (2S,4S)-4-hydroxy-2,3,4,5-tetrahydrodipicolinate + NADH + H(+). It carries out the reaction (S)-2,3,4,5-tetrahydrodipicolinate + NADP(+) + H2O = (2S,4S)-4-hydroxy-2,3,4,5-tetrahydrodipicolinate + NADPH + H(+). It participates in amino-acid biosynthesis; L-lysine biosynthesis via DAP pathway; (S)-tetrahydrodipicolinate from L-aspartate: step 4/4. Functionally, catalyzes the conversion of 4-hydroxy-tetrahydrodipicolinate (HTPA) to tetrahydrodipicolinate. This Clostridium perfringens (strain ATCC 13124 / DSM 756 / JCM 1290 / NCIMB 6125 / NCTC 8237 / Type A) protein is 4-hydroxy-tetrahydrodipicolinate reductase.